The following is a 254-amino-acid chain: Large ribosomal subunit protein uL2 (254 aa).

Belongs to the universal ribosomal protein uL2 family. In terms of assembly, component of the large ribosomal subunit. Mature ribosomes consist of a small (40S) and a large (60S) subunit. The 40S subunit contains about 32 different proteins and 1 molecule of RNA (18S). The 60S subunit contains 45 different proteins and 3 molecules of RNA (25S, 5.8S and 5S).

Its subcellular location is the cytoplasm. In terms of biological role, component of the ribosome, a large ribonucleoprotein complex responsible for the synthesis of proteins in the cell. The small ribosomal subunit (SSU) binds messenger RNAs (mRNAs) and translates the encoded message by selecting cognate aminoacyl-transfer RNA (tRNA) molecules. The large subunit (LSU) contains the ribosomal catalytic site termed the peptidyl transferase center (PTC), which catalyzes the formation of peptide bonds, thereby polymerizing the amino acids delivered by tRNAs into a polypeptide chain. The nascent polypeptides leave the ribosome through a tunnel in the LSU and interact with protein factors that function in enzymatic processing, targeting, and the membrane insertion of nascent chains at the exit of the ribosomal tunnel. This chain is Large ribosomal subunit protein uL2, found in Candida albicans (strain SC5314 / ATCC MYA-2876) (Yeast).